The primary structure comprises 129 residues: Biogenesis of lysosome-related organelles complex 1 subunit CNL1 (129 aa).

It belongs to the BLOC1S4 family. Component of the biogenesis of lysosome-related organelles complex-1 (BLOC-1).

Its subcellular location is the cytoplasm. Its function is as follows. Component of the biogenesis of lysosome-related organelles complex-1 (BLOC-1), a complex that is involved in endosomal cargo sorting. The chain is Biogenesis of lysosome-related organelles complex 1 subunit CNL1 (CLN1) from Eremothecium gossypii (strain ATCC 10895 / CBS 109.51 / FGSC 9923 / NRRL Y-1056) (Yeast).